We begin with the raw amino-acid sequence, 108 residues long: Synaptic plasticity regulator PANTS (108 aa).

The disordered stretch occupies residues 58–108; the sequence is KNHSTQAKDSLQESERKRLADQRKFTPVWELRQKPPSDWHLPLNQGEPQDP. A compositionally biased stretch (basic and acidic residues) spans 67–81; the sequence is SLQESERKRLADQRK.

The protein belongs to the UPF0545 family. Rapidly degraded by proteolysis following neuronal stimulation, resulting in increased AMPA receptor clustering.

It localises to the synapse. The protein resides in the synaptic cleft. Its function is as follows. Negatively regulates long-term potentiation and modulates adult synaptic plasticity. The chain is Synaptic plasticity regulator PANTS from Danio rerio (Zebrafish).